Here is a 664-residue protein sequence, read N- to C-terminus: Transmembrane protein 201 (664 aa).

Residue Met-1 is modified to N-acetylmethionine. At Met-1–Gln-214 the chain is on the nuclear side. Residues Val-215–Tyr-235 traverse the membrane as a helical segment. The Perinuclear space segment spans residues Gly-236–Gln-297. Low complexity predominate over residues Ala-245–Ser-261. The disordered stretch occupies residues Ala-245–Thr-264. A helical membrane pass occupies residues Thr-298–Ile-318. The Nuclear portion of the chain corresponds to Arg-319 to Arg-322. A helical membrane pass occupies residues Ile-323–Tyr-343. Over Leu-344 to Lys-356 the chain is Perinuclear space. Residues Phe-357–Thr-374 traverse the membrane as a helical segment. Residues Arg-375–Gly-642 lie on the Nuclear side of the membrane. Phosphoserine occurs at positions 441, 444, 450, 454, 466, 477, and 480. Residues Pro-502–Arg-522 form a disordered region. Low complexity predominate over residues Pro-508–Ser-520. Residue Ser-529 is modified to Phosphoserine. The segment at Ser-544–Thr-629 is disordered. Composition is skewed to basic and acidic residues over residues His-578–Glu-587 and Asp-595–Glu-608. A compositionally biased stretch (polar residues) spans Ser-610 to Thr-628. A helical membrane pass occupies residues Leu-643–Leu-663. Arg-664 is a topological domain (perinuclear space).

It belongs to the TMEM201 family. In terms of assembly, isoform 2 interacts with EMD. Isoform 3 interacts with SUN2 and LMNA. May bind to Ran GTPase; has a greater affinity for Ran-GTP over Ran-GDP.

It is found in the nucleus inner membrane. Critical regulator of angiogenesis and endothelial cell (EC) migration. Promotes the migration of endothelial cells, which is essential for angiogenesis. Interacts with the linker of nucleoskeleton and cytoskeleton (LINC) complex, which plays a vital role in connecting the cell's cytoskeleton to the nuclear envelope. This interaction is essential for maintaining cellular structure and facilitating the movement of endothelial cells, which is critical for proper vascular development. Involved in nuclear movement during fibroblast polarization and migration. May recruit Ran GTPase to the nuclear periphery. In terms of biological role, may define a distinct membrane domain in the vicinity of the mitotic spindle. Involved in the organization of the nuclear envelope implicating EMD, SUN1 and A-type lamina. Its function is as follows. Proposed to be involved in actin-dependent nuclear movement; via SUN2 associates with transmembrane actin-associated nuclear (TAN) lines which are bound to F-actin cables and couple the nucleus to retrograde actin flow. The polypeptide is Transmembrane protein 201 (Tmem201) (Mus musculus (Mouse)).